Consider the following 564-residue polypeptide: Eukaryotic translation initiation factor 3 subunit L (564 aa).

One can recognise a PCI domain in the interval D331–R537.

Belongs to the eIF-3 subunit L family. As to quaternary structure, component of the eukaryotic translation initiation factor 3 (eIF-3) complex, which is composed of 13 subunits: EIF3A, EIF3B, EIF3C, EIF3D, EIF3E, EIF3F, EIF3G, EIF3H, EIF3I, EIF3J, EIF3K, EIF3L and EIF3M.

It localises to the cytoplasm. Component of the eukaryotic translation initiation factor 3 (eIF-3) complex, which is involved in protein synthesis of a specialized repertoire of mRNAs and, together with other initiation factors, stimulates binding of mRNA and methionyl-tRNAi to the 40S ribosome. The eIF-3 complex specifically targets and initiates translation of a subset of mRNAs involved in cell proliferation. The chain is Eukaryotic translation initiation factor 3 subunit L from Gallus gallus (Chicken).